We begin with the raw amino-acid sequence, 612 residues long: Chaperone protein DnaK (612 aa).

Threonine 174 is modified (phosphothreonine; by autocatalysis). The disordered stretch occupies residues glycine 579–lysine 612. The segment covering alanine 581–aspartate 597 has biased composition (gly residues). Basic and acidic residues predominate over residues alanine 603 to lysine 612.

This sequence belongs to the heat shock protein 70 family.

In terms of biological role, acts as a chaperone. In Symbiobacterium thermophilum (strain DSM 24528 / JCM 14929 / IAM 14863 / T), this protein is Chaperone protein DnaK.